The following is a 143-amino-acid chain: Ribonuclease HI (143 aa).

The region spanning 1 to 136 is the RNase H type-1 domain; sequence MQEIEIFCDG…CDSLAKLEAQ (136 aa). 4 residues coordinate Mg(2+): D9, E47, D69, and D128.

It belongs to the RNase H family. In terms of assembly, monomer. Requires Mg(2+) as cofactor.

The protein localises to the cytoplasm. The enzyme catalyses Endonucleolytic cleavage to 5'-phosphomonoester.. Endonuclease that specifically degrades the RNA of RNA-DNA hybrids. In Helicobacter pylori (strain ATCC 700392 / 26695) (Campylobacter pylori), this protein is Ribonuclease HI (rnhA).